The chain runs to 790 residues: Polyribonucleotide nucleotidyltransferase (790 aa).

2 residues coordinate Mg(2+): Asp498 and Asp504. In terms of domain architecture, KH spans 565–624; that stretch reads PRILRIKIKPEQIGEVIGPGGRVIRAIQEQTGTKISIEEDGTVFISAANEDAARRAVREI. Positions 634–702 constitute an S1 motif domain; the sequence is GEIFYGRVVT…PDGKINLSRK (69 aa). The interval 710–790 is disordered; that stretch reads AERAATAQAP…KELLGEDEPN (81 aa). The segment covering 739 to 755 has biased composition (basic and acidic residues); that stretch reads PERRPGPPTPRRPEQRG. Residues 757-772 are compositionally biased toward pro residues; it reads SRPPRPQAQRSTPPPG.

Belongs to the polyribonucleotide nucleotidyltransferase family. The cofactor is Mg(2+).

Its subcellular location is the cytoplasm. The enzyme catalyses RNA(n+1) + phosphate = RNA(n) + a ribonucleoside 5'-diphosphate. Functionally, involved in mRNA degradation. Catalyzes the phosphorolysis of single-stranded polyribonucleotides processively in the 3'- to 5'-direction. This chain is Polyribonucleotide nucleotidyltransferase, found in Thermomicrobium roseum (strain ATCC 27502 / DSM 5159 / P-2).